A 71-amino-acid polypeptide reads, in one-letter code: Putative defensin-like protein 303 (71 aa).

Residues 1-25 (MKSNKATFFLGLLLVYAFCIMLIES) form the signal peptide. Disulfide bonds link Cys-27–Cys-45, Cys-33–Cys-50, and Cys-39–Cys-52.

This sequence belongs to the DEFL family.

It is found in the secreted. The protein is Putative defensin-like protein 303 of Arabidopsis thaliana (Mouse-ear cress).